Here is a 516-residue protein sequence, read N- to C-terminus: Exodeoxyribonuclease 7 large subunit (516 aa).

This sequence belongs to the XseA family. In terms of assembly, heterooligomer composed of large and small subunits.

It is found in the cytoplasm. It carries out the reaction Exonucleolytic cleavage in either 5'- to 3'- or 3'- to 5'-direction to yield nucleoside 5'-phosphates.. Its function is as follows. Bidirectionally degrades single-stranded DNA into large acid-insoluble oligonucleotides, which are then degraded further into small acid-soluble oligonucleotides. This is Exodeoxyribonuclease 7 large subunit from Chlamydia trachomatis serovar L2 (strain ATCC VR-902B / DSM 19102 / 434/Bu).